The chain runs to 261 residues: Proteasome subunit alpha type-4 (261 aa).

Phosphoserine occurs at positions 13 and 75. At K127 the chain carries N6-acetyllysine. S173 bears the Phosphoserine mark. K176 is modified (N6-acetyllysine). The tract at residues H240–K261 is disordered.

The protein belongs to the peptidase T1A family. The 26S proteasome consists of a 20S proteasome core and two 19S regulatory subunits. The 20S proteasome core is a barrel-shaped complex made of 28 subunits that are arranged in four stacked rings. The two outer rings are each formed by seven alpha subunits, and the two inner rings are formed by seven beta subunits. The proteolytic activity is exerted by three beta-subunits PSMB5, PSMB6 and PSMB7.

The protein localises to the cytoplasm. It is found in the nucleus. Its function is as follows. Component of the 20S core proteasome complex involved in the proteolytic degradation of most intracellular proteins. This complex plays numerous essential roles within the cell by associating with different regulatory particles. Associated with two 19S regulatory particles, forms the 26S proteasome and thus participates in the ATP-dependent degradation of ubiquitinated proteins. The 26S proteasome plays a key role in the maintenance of protein homeostasis by removing misfolded or damaged proteins that could impair cellular functions, and by removing proteins whose functions are no longer required. Associated with the PA200 or PA28, the 20S proteasome mediates ubiquitin-independent protein degradation. This type of proteolysis is required in several pathways including spermatogenesis (20S-PA200 complex) or generation of a subset of MHC class I-presented antigenic peptides (20S-PA28 complex). This chain is Proteasome subunit alpha type-4 (PSMA4), found in Macaca fascicularis (Crab-eating macaque).